A 187-amino-acid chain; its full sequence is Protein canopy-1 (187 aa).

Residues 1 to 24 form the signal peptide; sequence MSPWIKHICLVLVAAFMLVKTTES. The Saposin B-type domain maps to 28–181; sequence EALYCSACMA…EVSDHCKSSV (154 aa). Disulfide bonds link cysteine 32–cysteine 177, cysteine 35–cysteine 170, and cysteine 90–cysteine 143. Positions 184–187 match the Prevents secretion from ER motif; that stretch reads HSEL.

The protein belongs to the canopy family. Homodimer. Interacts with fgfr1.

Its subcellular location is the endoplasmic reticulum. Involved in the maintenance of the midbrain-hindbrain boundary (MHB) organizer. Contributes to a positive-feedback loop of FGF signaling in the MHB, enabling the MHB to exert its role as an organizer for the tectal and cerebellar development. This is Protein canopy-1 (cnpy1) from Danio rerio (Zebrafish).